The chain runs to 154 residues: Cytochrome c-type biogenesis protein CcmE (154 aa).

The Cytoplasmic segment spans residues 1–8 (MTPQRKRR). A helical; Signal-anchor for type II membrane protein membrane pass occupies residues 9-29 (LVMLAALAGGVGVAVALALAA). Residues 30–154 (LQQNINLFYS…GGTPAAEPQP (125 aa)) are Periplasmic-facing. Heme-binding residues include H124 and Y128. A disordered region spans residues 130–154 (PPEAAHALKQGAATSGGTPAAEPQP).

Belongs to the CcmE/CycJ family.

It is found in the cell inner membrane. In terms of biological role, heme chaperone required for the biogenesis of c-type cytochromes. Transiently binds heme delivered by CcmC and transfers the heme to apo-cytochromes in a process facilitated by CcmF and CcmH. This Bordetella petrii (strain ATCC BAA-461 / DSM 12804 / CCUG 43448) protein is Cytochrome c-type biogenesis protein CcmE.